The chain runs to 131 residues: D-ribose pyranase (131 aa).

Catalysis depends on His-20, which acts as the Proton donor. Substrate contacts are provided by residues Asp-28, His-98, and 120–122; that span reads YSN.

This sequence belongs to the RbsD / FucU family. RbsD subfamily. In terms of assembly, homodecamer.

Its subcellular location is the cytoplasm. It carries out the reaction beta-D-ribopyranose = beta-D-ribofuranose. It participates in carbohydrate metabolism; D-ribose degradation; D-ribose 5-phosphate from beta-D-ribopyranose: step 1/2. Functionally, catalyzes the interconversion of beta-pyran and beta-furan forms of D-ribose. The polypeptide is D-ribose pyranase (Lactobacillus gasseri (strain ATCC 33323 / DSM 20243 / BCRC 14619 / CIP 102991 / JCM 1131 / KCTC 3163 / NCIMB 11718 / NCTC 13722 / AM63)).